The following is a 283-amino-acid chain: Elongation factor Ts (283 aa).

An involved in Mg(2+) ion dislocation from EF-Tu region spans residues 80–83 (TDFV).

This sequence belongs to the EF-Ts family.

The protein resides in the cytoplasm. Associates with the EF-Tu.GDP complex and induces the exchange of GDP to GTP. It remains bound to the aminoacyl-tRNA.EF-Tu.GTP complex up to the GTP hydrolysis stage on the ribosome. In Salmonella agona (strain SL483), this protein is Elongation factor Ts.